The primary structure comprises 382 residues: tRNA (guanine(37)-N(1))-methyltransferase (382 aa).

S-adenosyl-L-methionine is bound by residues His-205, 243-244, 269-270, and Asn-291; these read DL and DA.

This sequence belongs to the class I-like SAM-binding methyltransferase superfamily. TRM5/TYW2 family. As to quaternary structure, monomer.

The protein resides in the mitochondrion matrix. It localises to the nucleus. It is found in the cytoplasm. It catalyses the reaction guanosine(37) in tRNA + S-adenosyl-L-methionine = N(1)-methylguanosine(37) in tRNA + S-adenosyl-L-homocysteine + H(+). Its function is as follows. Specifically methylates the N1 position of guanosine-37 in various cytoplasmic and mitochondrial tRNAs. Methylation is not dependent on the nature of the nucleoside 5' of the target nucleoside. This is the first step in the biosynthesis of wybutosine (yW), a modified base adjacent to the anticodon of tRNAs and required for accurate decoding. In Entamoeba histolytica (strain ATCC 30459 / HM-1:IMSS / ABRM), this protein is tRNA (guanine(37)-N(1))-methyltransferase.